The following is an 83-amino-acid chain: MAKGQSLQDPFLNALRKERIPVSIYLVNGIKLQGQVESFDQFVILLKNTVSQMVYKHAISTVVPSRALPVAATNPHADADENQ.

One can recognise a Sm domain in the interval 9–68; that stretch reads DPFLNALRKERIPVSIYLVNGIKLQGQVESFDQFVILLKNTVSQMVYKHAISTVVPSRAL.

It belongs to the Hfq family. In terms of assembly, homohexamer.

RNA chaperone that binds small regulatory RNA (sRNAs) and mRNAs to facilitate mRNA translational regulation in response to envelope stress, environmental stress and changes in metabolite concentrations. Also binds with high specificity to tRNAs. This Pseudoalteromonas atlantica (strain T6c / ATCC BAA-1087) protein is RNA-binding protein Hfq.